A 360-amino-acid chain; its full sequence is Serine/threonine transporter SstT (360 aa).

The next 9 membrane-spanning stretches (helical) occupy residues 17–37 (IGIGVVLGVLLGLIAPKITVI), 40–60 (FGSLFVGALKAIAPLLVLTLV), 78–98 (VICLYLFGTFAAAFIAVGASY), 138–158 (ALATANYIGVLTWAAVFGLAF), 179–199 (VVGWIIGLAPFGIMGLVFDTI), 212–232 (LLLLLLVGSMIFVALVVNPLI), 295–315 (MAGAAITINILTMAAVHTLGI), 316–336 (SVDFSSALLLSVVASLSAAGA), and 339–359 (VAGGSLLLIPVACSLFVVPYV).

It belongs to the dicarboxylate/amino acid:cation symporter (DAACS) (TC 2.A.23) family.

It localises to the cell membrane. It carries out the reaction L-serine(in) + Na(+)(in) = L-serine(out) + Na(+)(out). It catalyses the reaction L-threonine(in) + Na(+)(in) = L-threonine(out) + Na(+)(out). Its function is as follows. Involved in the import of serine and threonine into the cell, with the concomitant import of sodium (symport system). The sequence is that of Serine/threonine transporter SstT from Streptococcus suis (strain 05ZYH33).